A 148-amino-acid chain; its full sequence is UPF0260 protein mll2411 (148 aa).

This sequence belongs to the UPF0260 family.

The polypeptide is UPF0260 protein mll2411 (Mesorhizobium japonicum (strain LMG 29417 / CECT 9101 / MAFF 303099) (Mesorhizobium loti (strain MAFF 303099))).